We begin with the raw amino-acid sequence, 331 residues long: Olfactory receptor 10S1 (331 aa).

Over 1–38 (MTSRSVCEKMTMTTENPNQTVVSHFFLEGLRYTAKHSS) the chain is Extracellular. An N-linked (GlcNAc...) asparagine glycan is attached at Asn-18. The helical transmembrane segment at 39-59 (LFFLLFLLIYSITVAGNLLIL) threads the bilayer. At 60–67 (LTVGSDSH) the chain is on the cytoplasmic side. A helical transmembrane segment spans residues 68-88 (LSLPMYHFLGHLSFLDACLST). At 89–113 (VTVPKVMAGLLTLDGKVISFEGCAV) the chain is on the extracellular side. A disulfide bridge connects residues Cys-111 and Cys-203. The helical transmembrane segment at 114-134 (QLYCFHFLASTECFLYTVMAY) threads the bilayer. Residues 135-153 (DRYLAICQPLHYPVAMNRR) lie on the Cytoplasmic side of the membrane. A helical membrane pass occupies residues 154–174 (MCAEMAGITWAIGATHAAIHT). Over 175-211 (SLTFRLLYCGPCHIAYFFCDIPPVLKLACTDTTINEL) the chain is Extracellular. The helical transmembrane segment at 212–231 (VMLASIGIVAAGCLILIVIS) threads the bilayer. The Cytoplasmic segment spans residues 232–251 (YIFIVAAVLRIRTAQGRQRA). Residues 252–272 (FSPCTAQLTGVLLYYVPPVCI) form a helical membrane-spanning segment. Over 273–283 (YLQPRSSEAGA) the chain is Extracellular. The helical transmembrane segment at 284 to 304 (GAPAVFYTIVTPMLNPFIYTL) threads the bilayer. The Cytoplasmic segment spans residues 305–331 (RNKEVKHALQRLLCSSFRESTAGSPPP).

It belongs to the G-protein coupled receptor 1 family.

It is found in the cell membrane. Odorant receptor. The protein is Olfactory receptor 10S1 (OR10S1) of Homo sapiens (Human).